A 958-amino-acid chain; its full sequence is UPF0182 protein TW644 (958 aa).

7 consecutive transmembrane segments (helical) span residues 14–34 (IAIL…FFLV), 59–79 (IFVV…LCMF), 107–127 (KIVV…FAAS), 166–186 (LFFL…ISVV), 205–225 (VQYA…FWLN), 249–269 (LIPG…LFCI), and 280–300 (IIGV…LPWG).

This sequence belongs to the UPF0182 family.

Its subcellular location is the cell membrane. This chain is UPF0182 protein TW644, found in Tropheryma whipplei (strain TW08/27) (Whipple's bacillus).